The primary structure comprises 352 residues: tRNA N6-adenosine threonylcarbamoyltransferase (352 aa).

His109 and His113 together coordinate Fe cation. Substrate contacts are provided by residues 136-140 (TVSGG), Asp169, Gly182, Asp186, and Asn284. Residue Asp312 coordinates Fe cation.

This sequence belongs to the KAE1 / TsaD family. Requires Fe(2+) as cofactor.

It localises to the cytoplasm. The enzyme catalyses L-threonylcarbamoyladenylate + adenosine(37) in tRNA = N(6)-L-threonylcarbamoyladenosine(37) in tRNA + AMP + H(+). Functionally, required for the formation of a threonylcarbamoyl group on adenosine at position 37 (t(6)A37) in tRNAs that read codons beginning with adenine. Is involved in the transfer of the threonylcarbamoyl moiety of threonylcarbamoyl-AMP (TC-AMP) to the N6 group of A37, together with TsaE and TsaB. TsaD likely plays a direct catalytic role in this reaction. This chain is tRNA N6-adenosine threonylcarbamoyltransferase, found in Chloroherpeton thalassium (strain ATCC 35110 / GB-78).